Reading from the N-terminus, the 700-residue chain is Chaperonin CPN60, mitochondrial (700 aa).

The N-terminal 9 residues, 1–9, are a transit peptide targeting the mitochondrion; sequence MRMKRIHIL. Residues 636-700 form a disordered region; the sequence is TYKHKLHDDE…SMNDEYNYDE (65 aa). Residues 644–700 are compositionally biased toward acidic residues; sequence DEDTDEDDEEDEDDEDDEDDLDDDDYDDEDEEDEEDEEDEDDEDDEDSMNDEYNYDE.

The protein belongs to the chaperonin (HSP60) family.

Its subcellular location is the mitochondrion matrix. Functionally, implicated in mitochondrial protein import and macromolecular assembly. May facilitate the correct folding of imported proteins. May also prevent misfolding and promote the refolding and proper assembly of unfolded polypeptides generated under stress conditions in the mitochondrial matrix. This is Chaperonin CPN60, mitochondrial from Plasmodium falciparum (isolate FCR-3 / Gambia).